We begin with the raw amino-acid sequence, 142 residues long: MAKKIESYIKLQVAAQEANPSPPVGPALGQHGVNIMEFCKAFNVKTQDIDKGMKVPVVITVYSDRSFTFVTKAPPAALLILKITGIKKGSGVPHLDKVGNITRIQLEEVASMKMKDLNANDMDAAVHIISGTARSMGITVEG.

Belongs to the universal ribosomal protein uL11 family. As to quaternary structure, part of the ribosomal stalk of the 50S ribosomal subunit. Interacts with L10 and the large rRNA to form the base of the stalk. L10 forms an elongated spine to which L12 dimers bind in a sequential fashion forming a multimeric L10(L12)X complex. One or more lysine residues are methylated.

Its function is as follows. Forms part of the ribosomal stalk which helps the ribosome interact with GTP-bound translation factors. This Ruthia magnifica subsp. Calyptogena magnifica protein is Large ribosomal subunit protein uL11.